A 184-amino-acid chain; its full sequence is RNA 2',3'-cyclic phosphodiesterase (184 aa).

Histidine 42 acts as the Proton donor in catalysis. 2 consecutive short sequence motifs (HXTX) follow at residues 42 to 45 and 127 to 130; these read HFTL and HLTV. Histidine 127 serves as the catalytic Proton acceptor.

Belongs to the 2H phosphoesterase superfamily. ThpR family.

It carries out the reaction a 3'-end 2',3'-cyclophospho-ribonucleotide-RNA + H2O = a 3'-end 2'-phospho-ribonucleotide-RNA + H(+). Its function is as follows. Hydrolyzes RNA 2',3'-cyclic phosphodiester to an RNA 2'-phosphomonoester. The protein is RNA 2',3'-cyclic phosphodiesterase of Methanothermobacter thermautotrophicus (strain ATCC 29096 / DSM 1053 / JCM 10044 / NBRC 100330 / Delta H) (Methanobacterium thermoautotrophicum).